The chain runs to 1304 residues: MEAVPGTPPPPPSESPPPPSPPPPSTPSPPPCSPDGRAATPHLLHHRLPLPDDREDGELEEGELEDDGAEEVQDPPGGQERSRKEKGEKHHSDSEEEKSHRRLKRKRKKEREKEKRRSKKRRKSKHKRHASSSDDFSDFSDDSDFSPSEKSHRKYRDYSPPYAPSHQQYSSSHNAPLPKKSYSKMDSKGYSMYEDYENEQYGEYEGDEEEDMGKEDYDDFTKELNQYRRAKEGSSRGRGSRGRGRGYRGRGSRGGSRGRGMGRGSRGRGRGSMGEHPEDEEDLYEEEIEYGESEEPMGDDDYDDYSKELNQYRRSKDSRGRGLSRGRGRGSRGGRGKGMGRGRGRGGRGGMSKGGMNDDEDFYDDDMGDGGGGSYRRSDHDKPHQQSDKKGKVICKYFVEGRCTWGDHCNFSHDIELPKKRELCKFYITGFCARAENCPYMHGDFPCKLYHTTGNCINGDDCMFSHDPLTEETRELLDKMLADDAEAGAEDEKEVEELKKQGINPLPKPPPGVGLLPTPPRPPGPPAPTSPNGRPMQGGPPPPPPPPPPPPGPPQMSLPTHEPLSPQQLQQDMYNKKIPSLFEIVVRPTGQLAEKLGVRFPGPGGPSGPMGPGPNMGPPGPMGGPMHPDMHPDMHPDMHPDMHPDMHPDMHPDMHPDMHPDMPMGPGMNPGPPMGPGGPPMMPYGPGDSPHSGMMPPIPPAQNFYENFYPQQEGMEMEPGLVGDAEDYGHYEELPGQPGEPLFPEHPLEPDSFPEGGPPGRPKAGAGVPDFLPSAQRALYLRIQQKQQEEERARRLAESSKQDRENEEGDTGNWYSSDEDEGGSSVTSILKTLRQQTSSRPQASVGEPSSSGLGDPRLQKGHPTGSRLSDPRLSRDPRLSRHAETSGGSGPGDSGPSDPRLARALPTSKAEGSLHSSPAGPSSSKGQPPAEEEEGERALREKAVNIPLDPLPGHPLRDPRSQLQQFSHIKKDVTLSKPSFARTVLWNPEDLIPLPIPKQDVPPVPAALQSLPALDPRLHRSTPPGPPNTRQRPGSTDPSTSGSNLPDFELLSRILKTVNVNTPGQSEKPSDPRVRKTPTDPRLQKPADPVAASRAAKPCPTEASPPAASPSGDSSPPATAPYDPRVLAAGGLGQGSSSGQSSVLSGISLYDPRTPNAGGKTAEPASDTSAQPKGPEGNGKGSASKAKEPPFVRKSALEQPETGKASTDGATATDRYNSYNRPRPKATAAPTAASSTPPPEGATPQPGVHNLPVPTLFGTVKPAPKTGTGSPFAGNSPAREGEQDAGSLKDVFKGFDPTASPFCQ.

The span at 1-33 (MEAVPGTPPPPPSESPPPPSPPPPSTPSPPPCS) shows a compositional bias: pro residues. Residues 1 to 387 (MEAVPGTPPP…SDHDKPHQQS (387 aa)) are disordered. Residues 53 to 73 (DREDGELEEGELEDDGAEEVQ) are compositionally biased toward acidic residues. Residues 80 to 99 (ERSRKEKGEKHHSDSEEEKS) show a composition bias toward basic and acidic residues. Phosphoserine is present on residues serine 92 and serine 94. A coiled-coil region spans residues 94-128 (SEEEKSHRRLKRKRKKEREKEKRRSKKRRKSKHKR). Positions 100-130 (HRRLKRKRKKEREKEKRRSKKRRKSKHKRHA) are enriched in basic residues. Acidic residues predominate over residues 135–144 (DFSDFSDDSD). Tyrosine 155 is modified (phosphotyrosine). Residues 165 to 174 (SHQQYSSSHN) are compositionally biased toward polar residues. The segment covering 194–218 (EDYENEQYGEYEGDEEEDMGKEDYD) has biased composition (acidic residues). Positions 219 to 235 (DFTKELNQYRRAKEGSS) are enriched in basic and acidic residues. Residues 238–251 (RGSRGRGRGYRGRG) show a composition bias toward basic residues. Residues 252–264 (SRGGSRGRGMGRG) show a composition bias toward gly residues. Acidic residues predominate over residues 277-303 (PEDEEDLYEEEIEYGESEEPMGDDDYD). Residues 304–320 (DYSKELNQYRRSKDSRG) show a composition bias toward basic and acidic residues. Basic residues predominate over residues 322-346 (GLSRGRGRGSRGGRGKGMGRGRGRG). Residues 357–368 (NDDEDFYDDDMG) are compositionally biased toward acidic residues. The span at 376-387 (RRSDHDKPHQQS) shows a compositional bias: basic and acidic residues. 3 C3H1-type zinc fingers span residues 389-416 (KKGK…HDIE), 418-445 (PKKR…HGDF), and 446-469 (PCKL…HDPL). A compositionally biased stretch (acidic residues) spans 485 to 495 (AEAGAEDEKEV). The interval 485–567 (AEAGAEDEKE…LPTHEPLSPQ (83 aa)) is disordered. Pro residues-rich tracts occupy residues 506–529 (LPKP…PAPT) and 538–556 (GGPP…PPQM). Arginine 599 is subject to Asymmetric dimethylarginine. Disordered stretches follow at residues 601–691 (PGPG…DSPH), 719–970 (PGLV…SHIK), and 994–1304 (LPIP…PFCQ). Residues 603 to 622 (PGGPSGPMGPGPNMGPPGPM) show a composition bias toward pro residues. Residues 628–660 (PDMHPDMHPDMHPDMHPDMHPDMHPDMHPDMHP) show a composition bias toward basic and acidic residues. Residues 669-683 (NPGPPMGPGGPPMMP) show a composition bias toward pro residues. A coiled-coil region spans residues 778–809 (ALYLRIQQKQQEEERARRLAESSKQDRENEEG). Residues 787–804 (QQEEERARRLAESSKQDR) show a composition bias toward basic and acidic residues. 2 positions are modified to phosphoserine: serine 816 and serine 817. Over residues 824-852 (SSVTSILKTLRQQTSSRPQASVGEPSSSG) the composition is skewed to polar residues. Positions 869–884 (SDPRLSRDPRLSRHAE) are enriched in basic and acidic residues. Phosphoserine is present on residues serine 913, serine 916, and serine 917. A compositionally biased stretch (low complexity) spans 913–929 (SLHSSPAGPSSSKGQPP). The segment covering 994–1005 (LPIPKQDVPPVP) has biased composition (pro residues). Composition is skewed to polar residues over residues 1028 to 1044 (NTRQ…SGSN) and 1058 to 1067 (VNVNTPGQSE). Over residues 1068–1085 (KPSDPRVRKTPTDPRLQK) the composition is skewed to basic and acidic residues. Composition is skewed to low complexity over residues 1098-1129 (PCPT…VLAA) and 1137-1146 (SSGQSSVLSG). Serine 1104, serine 1109, serine 1111, and serine 1115 each carry phosphoserine. Residue threonine 1119 is modified to Phosphothreonine. The segment covering 1204–1220 (KASTDGATATDRYNSYN) has biased composition (polar residues). The segment covering 1225-1235 (KATAAPTAASS) has biased composition (low complexity). Residues serine 1270 and serine 1276 each carry the phosphoserine modification.

The protein belongs to the suppressor of sable family. In terms of assembly, interacts with WDR82.

The protein localises to the chromosome. In terms of biological role, RNA-binding protein that suppresses transcription of long non-coding RNAs (lncRNAs). LncRNAs are defined as transcripts more than 200 nucleotides that are not translated into protein. Together with WDR82, part of a transcription termination checkpoint that promotes transcription termination of lncRNAs and their subsequent degradation by the exosome. The transcription termination checkpoint is activated by the inefficiently spliced first exon of lncRNAs. In Mus musculus (Mouse), this protein is Zinc finger CCCH domain-containing protein 4.